The sequence spans 417 residues: MRLILPVGLIATTLAIAPVRFDREKVFRVKPQDEKQADIIKDLAKTNELDFWYPGATHHVAANMMVDFRVSEKESQAIQSALDQNKMHYEILIHDLQEEIEKQFDVKEDIPGRHSYAKYNNWEKIVAWTEKMMDKYPEMVSRIKIGSTVEDNPLYVLKIGEKNERRKAIFTDCGIHAREWVSPAFCQWFVYQATKTYGRNKIMTKLLDRMNFYILPVFNVDGYIWSWTKNRMWRKNRSKNQNSKCIGTDLNRNFNASWNSIPNTNDPCADNYRGSAPESEKETKAVTNFIRSHLNEIKVYITFHSYSQMLLFPYGYTSKLPPNHEDLAKVAKIGTDVLSTRYETRYIYGPIESTIYPISGSSLDWAYDLGIKHTFAFELRDKGKFGFLLPESRIKPTCRETMLAVKFIAKYILKHTS.

An N-terminal signal peptide occupies residues methionine 1 to alanine 15. The propeptide at isoleucine 16–aspartate 109 is activation peptide. Positions lysine 118–isoleucine 412 constitute a Peptidase M14 domain. 2 disulfide bridges follow: cysteine 173–cysteine 186 and cysteine 245–cysteine 268. Positions 176 and 179 each coordinate Zn(2+). Histidine 304 contacts Zn(2+). The active-site Proton donor/acceptor is glutamate 378.

It belongs to the peptidase M14 family. Zn(2+) is required as a cofactor.

The protein resides in the cytoplasmic vesicle. Its subcellular location is the secretory vesicle. The enzyme catalyses Release of a C-terminal amino acid, but little or no action with -Asp, -Glu, -Arg, -Lys or -Pro.. This Homo sapiens (Human) protein is Mast cell carboxypeptidase A (CPA3).